Consider the following 270-residue polypeptide: UBX domain-containing protein 8 (270 aa).

A topological domain (cytoplasmic) is located at residue methionine 1. Residues alanine 2–leucine 22 form a helical membrane-spanning segment. The Lumenal portion of the chain corresponds to arginine 23 to aspartate 33. Residues phenylalanine 34 to valine 54 traverse the membrane as a helical segment. The Cytoplasmic portion of the chain corresponds to threonine 55 to asparagine 270. Residues serine 130 to glutamine 171 are disordered. Serine 167 is subject to Phosphoserine. The UBX domain maps to threonine 187 to leucine 263.

Interacts with SYVN1 and VCP. In terms of tissue distribution, expressed abundantly in ovary and testis, and weakly in all other tissues tested.

It localises to the endoplasmic reticulum membrane. Its function is as follows. Involved in endoplasmic reticulum-associated degradation (ERAD) for misfolded lumenal proteins, possibly by tethering VCP to the endoplasmic reticulum membrane. May play a role in reproduction. This chain is UBX domain-containing protein 8 (UBXN8), found in Homo sapiens (Human).